The chain runs to 91 residues: Acylphosphatase (91 aa).

The Acylphosphatase-like domain maps to 5–91; the sequence is RLTAWVRGHV…RGSFTGFEER (87 aa). Residues arginine 20 and asparagine 38 contribute to the active site.

The protein belongs to the acylphosphatase family.

It carries out the reaction an acyl phosphate + H2O = a carboxylate + phosphate + H(+). The sequence is that of Acylphosphatase (acyP) from Thermobifida fusca (strain YX).